An 842-amino-acid chain; its full sequence is GPI ethanolamine phosphate transferase 2 (842 aa).

Residue Asn-186 is glycosylated (N-linked (GlcNAc...) asparagine). The chain crosses the membrane as a helical span at residues Tyr-409–Tyr-429. Asn-441 carries an N-linked (GlcNAc...) asparagine glycan. 2 consecutive transmembrane segments (helical) span residues Thr-442–Ile-462 and Phe-468–Ser-488. Asn-506 carries an N-linked (GlcNAc...) asparagine glycan. The helical transmembrane segment at Gly-524 to Leu-544 threads the bilayer. Asn-551 carries an N-linked (GlcNAc...) asparagine glycan. Residues Val-554 to Leu-574 traverse the membrane as a helical segment. N-linked (GlcNAc...) asparagine glycosylation occurs at Asn-578. 3 helical membrane-spanning segments follow: residues Ile-615–Val-635, Tyr-698–Gly-718, and Ile-740–Phe-760. Asn-771 carries an N-linked (GlcNAc...) asparagine glycan. The next 2 membrane-spanning stretches (helical) occupy residues Tyr-783–Leu-803 and Met-821–Leu-841.

Belongs to the PIGG/PIGN/PIGO family. PIGG subfamily.

The protein localises to the endoplasmic reticulum membrane. It participates in glycolipid biosynthesis; glycosylphosphatidylinositol-anchor biosynthesis. Functionally, ethanolamine phosphate transferase involved in glycosylphosphatidylinositol-anchor biosynthesis. Transfers ethanolamine phosphate to the GPI second mannose. This is GPI ethanolamine phosphate transferase 2 (LAS21) from Candida glabrata (strain ATCC 2001 / BCRC 20586 / JCM 3761 / NBRC 0622 / NRRL Y-65 / CBS 138) (Yeast).